Here is a 351-residue protein sequence, read N- to C-terminus: MVTKDSIIRDLERENVGPEFGEFLNTLQTDLNSEKPPIEQVKSQLETHFNLAHETQEFSRKNDNAPVDKLLTNYYNNYEVNVLEFVLQMGFSRDLSIPLNVWFVLDMISQLSTSKQDLPLDYYLVLNNSQTGKYSDFVRYLIYEAVGAEIHCFEQGSMPEQYRSSRWEDKVKGPALANRGPIRGNVGAGDRKITFHLLCKKTARMILVGDDRETDFEMSDRSFVTLLLDYYQRVGTTKKIDLLLLTNNFDTNMNNKLQQLKILESLNMLKSNCYVLDYQITVDQVTANFNSYVEGIPAFRRHEIANFLKKRKTPKNADELIFKYVGRWNICYQKKFHQGNISIHQISGYLD.

Heterododecamer of 4 alpha, 4 beta and 4 gamma chains. The gamma chain bridges the N-terminal halves of the alpha and beta subunits.

Its subcellular location is the cytoplasm. The protein operates within carbohydrate degradation; glycolysis; D-glyceraldehyde 3-phosphate and glycerone phosphate from D-glucose: step 3/4. Structural subunit of pyrophosphate--fructose 6-phosphate 1-phosphotransferase. Not required for catalytic activity. Fine-tunes allosteric regulation of the ATP-PFK by ATP, fructose 2,6-bisphosphate and AMP. The protein is ATP-dependent 6-phosphofructokinase subunit gamma (PFK3) of Komagataella pastoris (Yeast).